A 328-amino-acid polypeptide reads, in one-letter code: Malate dehydrogenase (328 aa).

NAD(+) is bound at residue 12-18 (GAAGQIA). Arg-93 and Arg-99 together coordinate substrate. NAD(+) contacts are provided by residues Asn-106, Gln-113, and 130–132 (VGN). Substrate-binding residues include Asn-132 and Arg-163. His-188 serves as the catalytic Proton acceptor.

The protein belongs to the LDH/MDH superfamily. MDH type 2 family.

It carries out the reaction (S)-malate + NAD(+) = oxaloacetate + NADH + H(+). Its function is as follows. Catalyzes the reversible oxidation of malate to oxaloacetate. The polypeptide is Malate dehydrogenase (Burkholderia lata (strain ATCC 17760 / DSM 23089 / LMG 22485 / NCIMB 9086 / R18194 / 383)).